Consider the following 26-residue polypeptide: Coenzyme PQQ synthesis protein A (26 aa).

The pyrroloquinoline quinone (Glu-Tyr) cross-link spans 16–20; it reads EINSY.

The protein belongs to the PqqA family.

It participates in cofactor biosynthesis; pyrroloquinoline quinone biosynthesis. Required for coenzyme pyrroloquinoline quinone (PQQ) biosynthesis. PQQ is probably formed by cross-linking a specific glutamate to a specific tyrosine residue and excising these residues from the peptide. This is Coenzyme PQQ synthesis protein A from Gluconacetobacter diazotrophicus (strain ATCC 49037 / DSM 5601 / CCUG 37298 / CIP 103539 / LMG 7603 / PAl5).